The chain runs to 208 residues: Small ribosomal subunit protein uS4 (208 aa).

One can recognise an S4 RNA-binding domain in the interval 98–163; it reads QRLDNVVYRM…NPQITRAIEL (66 aa).

Belongs to the universal ribosomal protein uS4 family. In terms of assembly, part of the 30S ribosomal subunit. Contacts protein S5. The interaction surface between S4 and S5 is involved in control of translational fidelity.

Functionally, one of the primary rRNA binding proteins, it binds directly to 16S rRNA where it nucleates assembly of the body of the 30S subunit. Its function is as follows. With S5 and S12 plays an important role in translational accuracy. This Campylobacter jejuni (strain RM1221) protein is Small ribosomal subunit protein uS4.